Reading from the N-terminus, the 755-residue chain is Sentrin-specific protease 5 (755 aa).

Residues 268–321 form a disordered region; the sequence is VQKVTGDHQETRRENGEGGSCSPFPSPEPKDPSCRHQPYFPDMDSSAVVKGTNS. Positions 272–283 are enriched in basic and acidic residues; that stretch reads TGDHQETRRENG. The tract at residues 567-724 is protease; sequence HMLDMDDLAT…VFVLQYCKCL (158 aa). Residues H646, D663, and C713 contribute to the active site.

Belongs to the peptidase C48 family. Interacts with CCAR2.

It localises to the nucleus. It is found in the nucleolus. Its function is as follows. Protease that catalyzes two essential functions in the SUMO pathway: processing of full-length SUMO3 to its mature form and deconjugation of SUMO2 and SUMO3 from targeted proteins. Has weak proteolytic activity against full-length SUMO1 or SUMO1 conjugates. Required for cell division. In Homo sapiens (Human), this protein is Sentrin-specific protease 5 (SENP5).